The primary structure comprises 648 residues: Threonine--tRNA ligase (648 aa).

The TGS domain maps to methionine 1–lysine 61. The tract at residues aspartate 243–proline 542 is catalytic. Zn(2+)-binding residues include cysteine 338, histidine 389, and histidine 519.

This sequence belongs to the class-II aminoacyl-tRNA synthetase family. In terms of assembly, homodimer. Zn(2+) is required as a cofactor.

It is found in the cytoplasm. The enzyme catalyses tRNA(Thr) + L-threonine + ATP = L-threonyl-tRNA(Thr) + AMP + diphosphate + H(+). Catalyzes the attachment of threonine to tRNA(Thr) in a two-step reaction: L-threonine is first activated by ATP to form Thr-AMP and then transferred to the acceptor end of tRNA(Thr). Also edits incorrectly charged L-seryl-tRNA(Thr). The sequence is that of Threonine--tRNA ligase from Azobacteroides pseudotrichonymphae genomovar. CFP2.